A 131-amino-acid chain; its full sequence is Small ribosomal subunit protein uS8 (131 aa).

This sequence belongs to the universal ribosomal protein uS8 family. In terms of assembly, part of the 30S ribosomal subunit. Contacts proteins S5 and S12.

One of the primary rRNA binding proteins, it binds directly to 16S rRNA central domain where it helps coordinate assembly of the platform of the 30S subunit. The chain is Small ribosomal subunit protein uS8 from Desulforudis audaxviator (strain MP104C).